A 478-amino-acid chain; its full sequence is Alpha-(1,3)-fucosyltransferase FucT (478 aa).

Residues glycine 94, 186-189 (VASN), arginine 195, 222-225 (VKNK), asparagine 240, and 246-250 (YVTEK) contribute to the substrate site. Positions 347-353 (DNPFIFC) are important for acceptor specificity. Tandem repeats lie at residues 364-370 (DDLRVNY), 371-377 (DDLRVNY), 378-384 (DDLRINY), 385-391 (DDLRVNY), 392-398 (DDLRINY), 399-405 (DDLRVNY), 406-412 (DDLRVNY), 413-419 (DDLRINY), 420-426 (DDLRVNY), and 427-433 (DDLRVNY). The 10 X 7 AA tandem repeat of D-D-L-R-[IV]-N-Y stretch occupies residues 364-433 (DDLRVNYDDL…VNYDDLRVNY (70 aa)). The interval 434 to 478 (ERLLSKATPLLELSQNTTSKIYRKAYQKSLPLLRAIRRWVKKLGL) is may be involved in membrane binding.

This sequence belongs to the glycosyltransferase 10 family. As to quaternary structure, homodimer.

It is found in the membrane. The protein localises to the cytoplasm. It carries out the reaction a beta-D-galactosyl-(1-&gt;4)-N-acetyl-beta-D-glucosaminyl derivative + GDP-beta-L-fucose = a beta-D-galactosyl-(1-&gt;4)-[alpha-L-fucosyl-(1-&gt;3)]-N-acetyl-beta-D-glucosaminyl derivative + GDP + H(+). The protein operates within lipopolysaccharide biosynthesis; LPS oligosaccharide biosynthesis. In terms of biological role, involved in the biosynthesis of the Lewis X (LeX) trisaccharide of the lipopolysaccharide (LPS) O-antigen. Catalyzes the addition of fucose in alpha 1-3 linkage to Gal-beta-1-4-GlcNAc-beta-O-R (LacNAc-R) type II acceptor. The protein is Alpha-(1,3)-fucosyltransferase FucT of Helicobacter pylori (Campylobacter pylori).